We begin with the raw amino-acid sequence, 244 residues long: Probable transcriptional regulatory protein MMOB1910 (244 aa).

The protein belongs to the TACO1 family.

Its subcellular location is the cytoplasm. This chain is Probable transcriptional regulatory protein MMOB1910, found in Mycoplasma mobile (strain ATCC 43663 / 163K / NCTC 11711) (Mesomycoplasma mobile).